A 223-amino-acid chain; its full sequence is Ribosomal RNA small subunit methyltransferase G (223 aa).

S-adenosyl-L-methionine contacts are provided by residues glycine 82, leucine 87, 133–134 (AE), and arginine 151.

Belongs to the methyltransferase superfamily. RNA methyltransferase RsmG family.

The protein resides in the cytoplasm. Its function is as follows. Specifically methylates the N7 position of guanine in position 518 of 16S rRNA. In Corynebacterium glutamicum (strain ATCC 13032 / DSM 20300 / JCM 1318 / BCRC 11384 / CCUG 27702 / LMG 3730 / NBRC 12168 / NCIMB 10025 / NRRL B-2784 / 534), this protein is Ribosomal RNA small subunit methyltransferase G.